The sequence spans 151 residues: Putative pre-16S rRNA nuclease (151 aa).

This sequence belongs to the YqgF nuclease family.

It localises to the cytoplasm. In terms of biological role, could be a nuclease involved in processing of the 5'-end of pre-16S rRNA. The polypeptide is Putative pre-16S rRNA nuclease (Prochlorococcus marinus subsp. pastoris (strain CCMP1986 / NIES-2087 / MED4)).